We begin with the raw amino-acid sequence, 511 residues long: Ribonuclease Y (511 aa).

A helical membrane pass occupies residues 2 to 22 (ITTVIIAIVCFAVGGGLSYML). The KH domain maps to 201–261 (SVTVFHIESD…VRREIARLAL (61 aa)). In terms of domain architecture, HD spans 327–420 (LLQHARETAN…VQVCDAISGA (94 aa)).

The protein belongs to the RNase Y family.

Its subcellular location is the cell membrane. In terms of biological role, endoribonuclease that initiates mRNA decay. The polypeptide is Ribonuclease Y (Phocaeicola vulgatus (strain ATCC 8482 / DSM 1447 / JCM 5826 / CCUG 4940 / NBRC 14291 / NCTC 11154) (Bacteroides vulgatus)).